An 824-amino-acid polypeptide reads, in one-letter code: MPIHTPRRTSLFQRSKTLPTNSYRRFTSPVIPTFRYDDGDTVSYDGDDSSNLPTVPNPEEKPVPVPSQSPSQRITRLWTQFSLTHCLKFICSCSFTYVMFLRSKVSRLEAENIILLTRCNSSSDNNEMEETNSRAVVFFSVIITFVLPFLLYMYLDDLSHVKNLLRRTNQKKEDVPLKKRLAYSLDVCFSVYPYAKLLALLLATVVLIVYGGLALYAVSDCGVDEALWLSWTFVADSGSHADRVGVGARIVSVAISAGGMLIFATMLGLISDAISKMVDSLRKGKSEVLESNHILILGWSDKLGSLLKQLAIANKSIGGGVVVVLAERDKEEMETDIAKFEFDLMGTSVICRSGSPLILADLKKVSVSNARAIIVLGSDENADQSDARALRVVLSLTGVKEGWKGHVVVEMCDLDNEPLVKLVGGERIETVVAHDVIGRLMIQCALQPGLAQIWEDILGFENAEFYIKKWPQLDGYCFEDVLISFPNAIPCGVKVAADGKIVLNPSDDYVLKEGDEILVIAEDDDTYAPGSLPEVRMCHFPKMQDPPKYPEKILFCGWRRDIDDMIKVLEALLAPGSELWMFNEVPDQEREKKLTDAGLNISKLVNIKLVHRQGNAVIRRHLESLPLETFDSILILAEQSLENSIVHSDSRSLATLLLIRDIQSKRLPYKDAKSSALRISGFPNCCWIRKMQQASDKSIVISEILDSRTKNLVSVSRISDYVLSNELVSMALAMVAEDKQINRVLKELFAEKGNELCIRPAEFYIYDQEEVCFYDIMRRARQRQEIIIGYRLAGMEQAVINPTDKSKLTKWSLDDVFVVIASSQ.

Positions 45–54 (DGDDSSNLPT) are enriched in low complexity. A disordered region spans residues 45 to 70 (DGDDSSNLPTVPNPEEKPVPVPSQSP). The next 4 membrane-spanning stretches (helical) occupy residues 81–101 (FSLT…VMFL), 135–155 (AVVF…YMYL), 198–218 (LALL…LYAV), and 250–270 (IVSV…LGLI). 2 RCK N-terminal domains span residues 291–432 (SNHI…ETVV) and 550–699 (PEKI…DKSI). Residues 325-346 (LAERDKEEMETDIAKFEFDLMG) are a coiled coil.

The protein belongs to the castor/pollux (TC 1.A.1.23) family.

The protein resides in the nucleus membrane. This is Probable ion channel POLLUX from Arabidopsis thaliana (Mouse-ear cress).